A 216-amino-acid polypeptide reads, in one-letter code: Peptide methionine sulfoxide reductase MsrA (216 aa).

C54 is a catalytic residue.

Belongs to the MsrA Met sulfoxide reductase family.

The enzyme catalyses L-methionyl-[protein] + [thioredoxin]-disulfide + H2O = L-methionyl-(S)-S-oxide-[protein] + [thioredoxin]-dithiol. The catalysed reaction is [thioredoxin]-disulfide + L-methionine + H2O = L-methionine (S)-S-oxide + [thioredoxin]-dithiol. In terms of biological role, has an important function as a repair enzyme for proteins that have been inactivated by oxidation. Catalyzes the reversible oxidation-reduction of methionine sulfoxide in proteins to methionine. This chain is Peptide methionine sulfoxide reductase MsrA, found in Xanthomonas campestris pv. campestris (strain ATCC 33913 / DSM 3586 / NCPPB 528 / LMG 568 / P 25).